We begin with the raw amino-acid sequence, 410 residues long: Polyadenylation and cleavage factor homolog 5 (410 aa).

A compositionally biased stretch (polar residues) spans 1–17 (MASNGSFSAQRNANAGT). A disordered region spans residues 1 to 32 (MASNGSFSAQRNANAGTTMKRRNDNRGYGGGI). Residues 191–214 (SKELTDLLSLLNNEKEKKTSEASN) are a coiled coil. The C2H2-type zinc-finger motif lies at 247–269 (RQCTSCGVRFKCQEEHSKHMDWH).

In terms of assembly, forms a complex with cleavage and polyadenylation specificity factor (CPSF) subunits CSTF77, CLPS3, PCFS4 and PCFS1.

The protein localises to the nucleus. In Arabidopsis thaliana (Mouse-ear cress), this protein is Polyadenylation and cleavage factor homolog 5.